The chain runs to 298 residues: Esterase Rv0045c (298 aa).

S122 functions as the Nucleophile in the catalytic mechanism. Active-site residues include D146 and H277.

Belongs to the AB hydrolase superfamily. As to quaternary structure, monomer.

The enzyme catalyses a carboxylic ester + H2O = an alcohol + a carboxylate + H(+). It catalyses the reaction a butanoate ester + H2O = an aliphatic alcohol + butanoate + H(+). The catalysed reaction is an acetyl ester + H2O = an aliphatic alcohol + acetate + H(+). It carries out the reaction a hexanoate ester + H2O = an aliphatic alcohol + hexanoate + H(+). The enzyme catalyses a tetradecanoate ester + H2O = an aliphatic alcohol + tetradecanoate + H(+). Its activity is regulated as follows. Hydrolysis of a fluorogenic ester substrate (MOAME) is allosterically inhibited by divalent transition metal cations (Cu(2+), Zn(2+), Ni(2+) and Co(2+)). Inhibition is largely due to a two order of magnitude drop in kcat, with relatively little change in KM. The thermal stability decreases with increasing concentrations of Ni(2+). Its function is as follows. Esterase likely involved in ester/lipid metabolism. Shows strong substrate selectivity toward short, straight chain alkyl esters with the highest activity toward four atom chains. The physiological substrate is unknown. Is able to hydrolyze ester bonds within a wide range of p-nitrophenyl derivatives (C2-C14) in vitro. The protein is Esterase Rv0045c of Mycobacterium tuberculosis (strain ATCC 25618 / H37Rv).